A 510-amino-acid polypeptide reads, in one-letter code: Alpha-L-arabinofuranosidase B (510 aa).

The signal sequence occupies residues 1-24; that stretch reads MTMSRSSRSSVLALALATGSLVAA. Positions 25-342 are catalytic; that stretch reads GPCDIYSSGG…ADIVAAKYAT (318 aa). 3 disulfide bridges follow: cysteine 27/cysteine 37, cysteine 87/cysteine 92, and cysteine 182/cysteine 183. N-linked (GlcNAc...) asparagine glycosylation occurs at asparagine 89. Aspartate 225 is a substrate binding site. Glutamate 227 acts as the Nucleophile in catalysis. Positions 228 and 303 each coordinate substrate. Aspartate 304 acts as the Proton donor in catalysis. An ABD region spans residues 343 to 510; that stretch reads TSLISGPALT…VSWVVADGFA (168 aa). Cysteine 412 and cysteine 450 are disulfide-bonded. Substrate is bound by residues histidine 427, asparagine 429, phenylalanine 430, aspartate 446, histidine 475, glutamate 477, leucine 480, and aspartate 500.

This sequence belongs to the glycosyl hydrolase 54 family.

It is found in the secreted. It catalyses the reaction Hydrolysis of terminal non-reducing alpha-L-arabinofuranoside residues in alpha-L-arabinosides.. Its pathway is glycan metabolism; L-arabinan degradation. Its function is as follows. Alpha-L-arabinofuranosidase involved in the degradation of arabinoxylan, a major component of plant hemicellulose. Able to hydrolyze 1,5-, 1,3- and 1,2-alpha-linkages not only in L-arabinofuranosyl oligosaccharides, but also in polysaccharides containing terminal non-reducing L-arabinofuranoses in side chains, like L-arabinan, arabinogalactan and arabinoxylan. The chain is Alpha-L-arabinofuranosidase B (abfB) from Emericella nidulans (strain FGSC A4 / ATCC 38163 / CBS 112.46 / NRRL 194 / M139) (Aspergillus nidulans).